The following is a 472-amino-acid chain: MAGGEAGVTLGQPHLSRQDLTTLDVTKLTPLSHEVISRQATINIGTIGHVAHGKSTVVKAISGVHTVRFKNELERNITIKLGYANAKIYKLDDPSCPRPECYRSCGSSTPDEFPTDIPGTKGNFKLVRHVSFVDCPGHDILMATMLNGAAVMDAALLLIAGNESCPQPQTSEHLAAIEIMKLKHILILQNKIDLVKESQAKEQYEQILAFVQGTVAEGAPIIPISAQLKYNIEVVCEYIVKKIPVPPRDFTSEPRLIVIRSFDVNKPGCEVDDLKGGVAGGSILKGVLKVGQEIEVRPGIVSKDSEGKLMCKPIFSKIVSLFAEHNDLQYAAPGGLIGVGTKIDPTLCRADRMVGQVLGAVGALPEIFTELEISYFLLRRLLGVRTEGDKKAAKVQKLSKNEVLMVNIGPLSTGGRVSAVKADLGKIVLTNPVCTEVGEKIALSRRVEKHWRLIGWGQIRRGVTIKPTVDDD.

Ala2 is subject to N-acetylalanine. The residue at position 16 (Ser16) is a Phosphoserine. In terms of domain architecture, tr-type G spans 39 to 248; the sequence is QATINIGTIG…IVKKIPVPPR (210 aa). Residues 48 to 55 are G1; the sequence is GHVAHGKS. Residue 51 to 56 coordinates GTP; it reads AHGKST. The tract at residues 76 to 80 is G2; the sequence is NITIK. The interval 134-137 is G3; it reads DCPG. GTP-binding positions include 190–193 and 225–227; these read NKID and SAQ. Residues 190–193 are G4; it reads NKID. The G5 stretch occupies residues 225 to 227; sequence SAQ. An interacts with CDC123 region spans residues 457–469; sequence GQIRRGVTIKPTV.

Belongs to the TRAFAC class translation factor GTPase superfamily. Classic translation factor GTPase family. EIF2G subfamily. In terms of assembly, eukaryotic translation initiation factor 2 eIF2 is a heterotrimeric complex composed of an alpha (EIF2S1), a beta (EIF2S2) and a gamma (EIF2S3) chain. eIF2 is member of the 43S pre-initiation complex (43S PIC). Interacts (via C-terminus) with CDC123; the interaction is direct.

It is found in the cytoplasm. Its subcellular location is the cytosol. It carries out the reaction GTP + H2O = GDP + phosphate + H(+). In terms of biological role, member of the eIF2 complex that functions in the early steps of protein synthesis by forming a ternary complex with GTP and initiator tRNA. This complex binds to a 40S ribosomal subunit, followed by mRNA binding to form the 43S pre-initiation complex (43S PIC). Junction of the 60S ribosomal subunit to form the 80S initiation complex is preceded by hydrolysis of the GTP bound to eIF2 and release of an eIF2-GDP binary complex. In order for eIF2 to recycle and catalyze another round of initiation, the GDP bound to eIF2 must exchange with GTP by way of a reaction catalyzed by eIF-2B. The polypeptide is Eukaryotic translation initiation factor 2 subunit 3 (EIF2S3) (Pongo abelii (Sumatran orangutan)).